Reading from the N-terminus, the 241-residue chain is MSETLLYSGKAKDLFSTDDPEVLKMIYKDQATALNGKRKEQITGKGEVNYEISKLIFAYLSQQGIETHLIKNVSETEQLVKKVTIIPLEVVLRNVVAGSFARKFGQPLGQRLEQPIIEYYYKNDALDDPAINISQATALKLVTPTEVATIEAMTKQINTLLIKLFNEIGIDLIDFKLEFGRYQGRLILADEFSPDNCRLWDQKTHSSLDKDVFRQNKGDLVTVYETVLQRLTKMIGGFANV.

This sequence belongs to the SAICAR synthetase family.

It carries out the reaction 5-amino-1-(5-phospho-D-ribosyl)imidazole-4-carboxylate + L-aspartate + ATP = (2S)-2-[5-amino-1-(5-phospho-beta-D-ribosyl)imidazole-4-carboxamido]succinate + ADP + phosphate + 2 H(+). Its pathway is purine metabolism; IMP biosynthesis via de novo pathway; 5-amino-1-(5-phospho-D-ribosyl)imidazole-4-carboxamide from 5-amino-1-(5-phospho-D-ribosyl)imidazole-4-carboxylate: step 1/2. The chain is Phosphoribosylaminoimidazole-succinocarboxamide synthase from Latilactobacillus sakei subsp. sakei (strain 23K) (Lactobacillus sakei subsp. sakei).